We begin with the raw amino-acid sequence, 472 residues long: SURF6 homolog gldi-11 (472 aa).

4 disordered regions span residues 53-73 (LSKK…AKGL), 89-232 (KSKQ…SPEI), 249-350 (KVER…DRAL), and 414-472 (LVKK…GRIL). Over residues 95–106 (KVQPQKVVAPVK) the composition is skewed to low complexity. The span at 107-132 (RPADQNKNKEKVVKKDQKKQDKKADS) shows a compositional bias: basic and acidic residues. The span at 133–150 (DSEEDDSSDDEEKEETDE) shows a compositional bias: acidic residues. Positions 151–160 (PVAKKQKKEE) are enriched in basic and acidic residues. 2 stretches are compositionally biased toward acidic residues: residues 161–175 (SSDD…EEPE) and 182–194 (EAED…EEEE). Polar residues predominate over residues 197–210 (SKPNKTVAQSTLKS). The segment covering 212-221 (GKIDKEIQKL) has biased composition (basic and acidic residues). Basic residues predominate over residues 274–285 (LKRRESKLKLKQ). The segment covering 286–305 (RRAEEKKGKEAAAQVKKETV) has biased composition (basic and acidic residues). Residues 414 to 426 (LVKKNKMKDRRKQ) are compositionally biased toward basic residues. A compositionally biased stretch (basic and acidic residues) spans 427–443 (KWENRENKTEGEKQTKQ). Over residues 459–472 (KRKMNKLRNKGRIL) the composition is skewed to basic residues.

It belongs to the SURF6 family.

It is found in the nucleus. It localises to the nucleoplasm. Functionally, binds to both DNA and RNA in vitro, with a stronger binding capacity for RNA. May represent a nucleolar constitutive protein involved in ribosomal biosynthesis or assembly. The protein is SURF6 homolog gldi-11 of Caenorhabditis elegans.